The following is a 318-amino-acid chain: Porphobilinogen deaminase (318 aa).

Cys241 is subject to S-(dipyrrolylmethanemethyl)cysteine.

This sequence belongs to the HMBS family. Monomer. Dipyrromethane is required as a cofactor.

It catalyses the reaction 4 porphobilinogen + H2O = hydroxymethylbilane + 4 NH4(+). The protein operates within porphyrin-containing compound metabolism; protoporphyrin-IX biosynthesis; coproporphyrinogen-III from 5-aminolevulinate: step 2/4. Tetrapolymerization of the monopyrrole PBG into the hydroxymethylbilane pre-uroporphyrinogen in several discrete steps. The chain is Porphobilinogen deaminase from Citrifermentans bemidjiense (strain ATCC BAA-1014 / DSM 16622 / JCM 12645 / Bem) (Geobacter bemidjiensis).